A 343-amino-acid chain; its full sequence is Mas-related G-protein coupled receptor member F (343 aa).

At 1–44 (MAGNCSWEAHSTNQNKMCPGMSEALELYSRGFLTIEQIATLPPP) the chain is on the extracellular side. Asn-4 is a glycosylation site (N-linked (GlcNAc...) asparagine). Residues 45–66 (AVTNYIFLLLCLCGLVGNGLVL) traverse the membrane as a helical segment. The Cytoplasmic segment spans residues 67–82 (WFFGFSIKRTPFSIYF). The chain crosses the membrane as a helical span at residues 83–104 (LHLASADGIYLFSKAVIALLNM). The Extracellular segment spans residues 105–123 (GTFLGSFPDYVRRVSRIVG). The helical transmembrane segment at 124-144 (LCTFFAGVSLLPAISIERCVS) threads the bilayer. Residues 145–160 (VIFPMWYWRRRPKRLS) are Cytoplasmic-facing. The chain crosses the membrane as a helical span at residues 161 to 181 (AGVCALLWLLSFLVTSIHNYF). Residues 182 to 198 (CMFLGHEASGTACLNMD) lie on the Extracellular side of the membrane. The chain crosses the membrane as a helical span at residues 199 to 220 (ISLGILLFFLFCPLMVLPCLAL). Over 221–241 (ILHVECRARRRQRSAKLNHVV) the chain is Cytoplasmic. The chain crosses the membrane as a helical span at residues 242–263 (LAIVSVFLVSSIYLGIDWFLFW). Residues 264–273 (VFQIPAPFPE) are Extracellular-facing. Residues 274–294 (YVTDLCICINSSAKPIVYFLA) traverse the membrane as a helical segment. Over 295 to 343 (GRDKSQRLWEPLRVVFQRALRDGAEPGDAASSTPNTVTMEMQCPSGNAS) the chain is Cytoplasmic. Residues 318-343 (AEPGDAASSTPNTVTMEMQCPSGNAS) are disordered. Residues 324–343 (ASSTPNTVTMEMQCPSGNAS) are compositionally biased toward polar residues.

The protein belongs to the G-protein coupled receptor 1 family. Mas subfamily. In terms of tissue distribution, gut, vas deferens, uterus and aorta; barely detectable in liver, kidney, lung, and salivary gland. In the brain, markedly abundant in the cerebellum.

It is found in the cell membrane. In terms of biological role, orphan receptor. May bind to a neuropeptide and may regulate nociceptor function and/or development, including the sensation or modulation of pain. This is Mas-related G-protein coupled receptor member F (Mrgprf) from Rattus norvegicus (Rat).